The sequence spans 87 residues: Acylphosphatase (87 aa).

One can recognise an Acylphosphatase-like domain in the interval Arg2–Tyr87. Active-site residues include Arg17 and Asn35.

This sequence belongs to the acylphosphatase family.

The enzyme catalyses an acyl phosphate + H2O = a carboxylate + phosphate + H(+). This chain is Acylphosphatase (acyP), found in Deinococcus radiodurans (strain ATCC 13939 / DSM 20539 / JCM 16871 / CCUG 27074 / LMG 4051 / NBRC 15346 / NCIMB 9279 / VKM B-1422 / R1).